The following is a 197-amino-acid chain: Holliday junction branch migration complex subunit RuvA (197 aa).

Residues 1-64 (MIGRLRGIVA…EDSVSLYGFL (64 aa)) are domain I. Positions 65 to 143 (REGERRLFRD…QFGAGGALPT (79 aa)) are domain II. The interval 144–153 (GSGPAPADPL) is flexible linker. The interval 153-197 (LSDATVALQQLGYKPAEAARMAREAFNEGDEVAIVIRKALQSALR) is domain III.

Belongs to the RuvA family. Homotetramer. Forms an RuvA(8)-RuvB(12)-Holliday junction (HJ) complex. HJ DNA is sandwiched between 2 RuvA tetramers; dsDNA enters through RuvA and exits via RuvB. An RuvB hexamer assembles on each DNA strand where it exits the tetramer. Each RuvB hexamer is contacted by two RuvA subunits (via domain III) on 2 adjacent RuvB subunits; this complex drives branch migration. In the full resolvosome a probable DNA-RuvA(4)-RuvB(12)-RuvC(2) complex forms which resolves the HJ.

It is found in the cytoplasm. The RuvA-RuvB-RuvC complex processes Holliday junction (HJ) DNA during genetic recombination and DNA repair, while the RuvA-RuvB complex plays an important role in the rescue of blocked DNA replication forks via replication fork reversal (RFR). RuvA specifically binds to HJ cruciform DNA, conferring on it an open structure. The RuvB hexamer acts as an ATP-dependent pump, pulling dsDNA into and through the RuvAB complex. HJ branch migration allows RuvC to scan DNA until it finds its consensus sequence, where it cleaves and resolves the cruciform DNA. The polypeptide is Holliday junction branch migration complex subunit RuvA (Stenotrophomonas maltophilia (strain R551-3)).